Here is a 404-residue protein sequence, read N- to C-terminus: Alanine racemase (404 aa).

Residue K34 is the Proton acceptor; specific for D-alanine of the active site. K34 carries the N6-(pyridoxal phosphate)lysine modification. R133 serves as a coordination point for substrate. Positions 226-273 (EVSSNLSYTEEFESNTAALTTTACINKCPDVSVRLTPKLPLKGSYTVR) constitute an RPE1 insert domain. Y298 functions as the Proton acceptor; specific for L-alanine in the catalytic mechanism. M346 serves as a coordination point for substrate.

The protein belongs to the alanine racemase family. Pyridoxal 5'-phosphate is required as a cofactor.

It catalyses the reaction L-alanine = D-alanine. The protein operates within amino-acid biosynthesis; D-alanine biosynthesis; D-alanine from L-alanine: step 1/1. Its function is as follows. Catalyzes the interconversion of L-alanine and D-alanine. May also act on other amino acids. This is Alanine racemase (alr) from Rickettsia prowazekii (strain Madrid E).